The chain runs to 519 residues: Ribonuclease Y 1 (519 aa).

A helical membrane pass occupies residues 3 to 23 (VPIVILAIIAIVVGVVGGYYL). Residues 92–120 (QREETLDRKDNSLEKRENSLNRRDKKLSA) are compositionally biased toward basic and acidic residues. The disordered stretch occupies residues 92 to 124 (QREETLDRKDNSLEKRENSLNRRDKKLSAEEQN). A KH domain is found at 209-272 (TITVVTLPND…EVAKIALEKL (64 aa)). The HD domain occupies 335 to 428 (ALAHSIEVAK…VSTADIISAT (94 aa)).

It belongs to the RNase Y family.

Its subcellular location is the cell membrane. Functionally, endoribonuclease that initiates mRNA decay. In Levilactobacillus brevis (strain ATCC 367 / BCRC 12310 / CIP 105137 / JCM 1170 / LMG 11437 / NCIMB 947 / NCTC 947) (Lactobacillus brevis), this protein is Ribonuclease Y 1.